Here is a 286-residue protein sequence, read N- to C-terminus: Bifunctional protein FolD (286 aa).

NADP(+) contacts are provided by residues 166–168, serine 191, and isoleucine 232; that span reads GRS.

Belongs to the tetrahydrofolate dehydrogenase/cyclohydrolase family. As to quaternary structure, homodimer.

It carries out the reaction (6R)-5,10-methylene-5,6,7,8-tetrahydrofolate + NADP(+) = (6R)-5,10-methenyltetrahydrofolate + NADPH. The catalysed reaction is (6R)-5,10-methenyltetrahydrofolate + H2O = (6R)-10-formyltetrahydrofolate + H(+). It functions in the pathway one-carbon metabolism; tetrahydrofolate interconversion. In terms of biological role, catalyzes the oxidation of 5,10-methylenetetrahydrofolate to 5,10-methenyltetrahydrofolate and then the hydrolysis of 5,10-methenyltetrahydrofolate to 10-formyltetrahydrofolate. This chain is Bifunctional protein FolD, found in Herpetosiphon aurantiacus (strain ATCC 23779 / DSM 785 / 114-95).